The following is a 360-amino-acid chain: MTRSTTPPMRAKHSSAKRSPSRSAAKVNPVSVKPNKPLLSKALHPRNAHLQGYDFATLIIAMPALAAFVRPNPYGNPSIDFADPKAVKSLNAALLLSEYHINGWDIPEGYLCPPVPGRVDYLHYIADLLAVKGKVVKGASIRGLDIGTGANGIYPLLGIQTYGWQFVASDIDPVSIDNVAKIAQQNEKITAHLQLRLQPQPEHIFKNIIAADERFDVTLCNPPFHSSLAEASEGSLRKVKNLAKNQQQKHGQQSRKLAVSQAKPTLNFGGQKAELWCQGGEQQFLANMIKQSRDYANQVLWFTSLVSKSDNLKPCYQLLKQLNAVEVKTIEMTQGNKATRILAWSFLTPAIHQQWATLRP.

The interval 1–38 is disordered; the sequence is MTRSTTPPMRAKHSSAKRSPSRSAAKVNPVSVKPNKPL. Basic residues predominate over residues 10–20; it reads RAKHSSAKRSP.

The protein belongs to the methyltransferase superfamily. METTL16/RlmF family.

It localises to the cytoplasm. The enzyme catalyses adenosine(1618) in 23S rRNA + S-adenosyl-L-methionine = N(6)-methyladenosine(1618) in 23S rRNA + S-adenosyl-L-homocysteine + H(+). Its function is as follows. Specifically methylates the adenine in position 1618 of 23S rRNA. The sequence is that of Ribosomal RNA large subunit methyltransferase F from Shewanella frigidimarina (strain NCIMB 400).